The following is a 499-amino-acid chain: Cryptochrome-1 (499 aa).

FAD is bound by residues Arg-190, Ser-218, Ser-220, Gln-261, His-328, 360–362 (DAD), Cys-366, and Asn-369.

Belongs to the DNA photolyase class-1 family. In terms of assembly, interacts with tim and per; promoted by light conditions. FAD serves as cofactor.

It localises to the cytoplasm. The protein localises to the perinuclear region. The protein resides in the nucleus. Functionally, blue light-dependent regulator that is the input of the circadian feedback loop. Has no photolyase activity for cyclobutane pyrimidine dimers or 6-4 photoproducts. Regulation of expression by light suggests a role in photoreception for locomotor activity rhythms. Functions, together with per, as a transcriptional repressor required for the oscillation of peripheral circadian clocks and for the correct specification of clock cells. Genes directly activated by the transcription factors Clock (Clk) and cycle (cyc) are repressed by cry. In Culex quinquefasciatus (Southern house mosquito), this protein is Cryptochrome-1.